We begin with the raw amino-acid sequence, 599 residues long: MGPKRRQLTFREKSRIIQEVEENPDLRKGEIARRFNIPPSTLSTILKNKRAILASERKYGVASTCRKTNKLSPYDKLEGLLIAWFQQIRAAGLPVKGIILKEKALRIAEELGMDDFTASNGWLDRFRRRHGVVSCSGVARARARNAAPRTPAAPASPAAVPSEGSGGSTTGWRAREEQPPSVAEGYASQDVFSATETSLWYDFLPDQAAGLCGGDGRPRQATQRLSVLLCANADGSEKLPPLVAGKSAKPRAGQAGLPCDYTANSKGGVTTQALAKYLKALDTRMAAESRRVLLLAGRLAAQSLDTSGLRHVQLAFFPPGTVHPLERGVVQQVKGHYRQAMLLKAMAALEGQDPSGLQLGLTEALHFVAAAWQAVEPSDIAACFREAGFGGGPNATITTSLKSEGEEEEEEEEEEEEEEGEGEEEEEEGEEEEEEGGEGEELGEEEEVEEEGDVDSDEEEEEDEESSSEGLEAEDWAQGVVEAGGSFGAYGAQEEAQCPTLHFLEGGEDSDSDSEEEDDEEEDDEDEDDDDDEEDGDEVPVPSFGEAMAYFAMVKRYLTSFPIDDRVQSHILHLEHDLVHVTRKNHARQAGVRGLGHQS.

Glycine 2 carries the post-translational modification N,N,N-trimethylglycine; alternate. The residue at position 2 (glycine 2) is a N,N-dimethylglycine; alternate. Glycine 2 is modified (N-methylglycine; alternate). Positions 2-52 constitute an HTH psq-type domain; the sequence is GPKRRQLTFREKSRIIQEVEENPDLRKGEIARRFNIPPSTLSTILKNKRAI. 2 consecutive DNA-binding regions (H-T-H motif) follow at residues 28–48 and 97–129; these read KGEI…ILKN and GIIL…FRRR. Positions 65 to 136 constitute an HTH CENPB-type domain; sequence CRKTNKLSPY…RRRHGVVSCS (72 aa). Residues 143-184 form a disordered region; sequence ARNAAPRTPAAPASPAAVPSEGSGGSTTGWRAREEQPPSVAE. The segment covering 144–159 has biased composition (low complexity); the sequence is RNAAPRTPAAPASPAA. Phosphoserine occurs at positions 156 and 165. A Glycyl lysine isopeptide (Lys-Gly) (interchain with G-Cter in SUMO2) cross-link involves residue lysine 246. 2 disordered regions span residues 387 to 475 and 495 to 544; these read AGFG…EAED and EAQC…VPSF. A phosphothreonine mark is found at threonine 396 and threonine 398. Acidic residues-rich tracts occupy residues 405-475 and 506-538; these read GEEE…EAED and GGED…DGDE. Residues 536 to 599 are homodimerization; the sequence is GDEVPVPSFG…AGVRGLGHQS (64 aa).

Antiparallel homodimer. Interacts with CENPT. Identified in a centromere complex containing histones H2A, H2B and H4, and at least CENPA, CENPB, CENPC, CENPT, CENPN, HJURP, SUPT16H, SSRP1 and RSF1. Poly-ADP-ribosylated by PARP1. In terms of processing, N-terminally methylated by METTL11A/NTM1. Alpha-N-methylation is stimulated in response to extracellular stimuli, including increased cell density and heat shock, and seems to facilitate binding to CENP-B boxes. Chromatin-bound CENP-B is primarily trimethylated.

It is found in the nucleus. The protein localises to the chromosome. Its subcellular location is the centromere. Functionally, interacts with centromeric heterochromatin in chromosomes and binds to a specific 17 bp subset of alphoid satellite DNA, called the CENP-B box. May organize arrays of centromere satellite DNA into a higher-order structure which then directs centromere formation and kinetochore assembly in mammalian chromosomes. This is Major centromere autoantigen B (CENPB) from Homo sapiens (Human).